Consider the following 175-residue polypeptide: Crossover junction endodeoxyribonuclease RuvC (175 aa).

Residues Asp-7, Glu-68, and Asp-141 contribute to the active site. Positions 7, 68, and 141 each coordinate Mg(2+).

This sequence belongs to the RuvC family. In terms of assembly, homodimer which binds Holliday junction (HJ) DNA. The HJ becomes 2-fold symmetrical on binding to RuvC with unstacked arms; it has a different conformation from HJ DNA in complex with RuvA. In the full resolvosome a probable DNA-RuvA(4)-RuvB(12)-RuvC(2) complex forms which resolves the HJ. Mg(2+) is required as a cofactor.

It is found in the cytoplasm. The enzyme catalyses Endonucleolytic cleavage at a junction such as a reciprocal single-stranded crossover between two homologous DNA duplexes (Holliday junction).. In terms of biological role, the RuvA-RuvB-RuvC complex processes Holliday junction (HJ) DNA during genetic recombination and DNA repair. Endonuclease that resolves HJ intermediates. Cleaves cruciform DNA by making single-stranded nicks across the HJ at symmetrical positions within the homologous arms, yielding a 5'-phosphate and a 3'-hydroxyl group; requires a central core of homology in the junction. The consensus cleavage sequence is 5'-(A/T)TT(C/G)-3'. Cleavage occurs on the 3'-side of the TT dinucleotide at the point of strand exchange. HJ branch migration catalyzed by RuvA-RuvB allows RuvC to scan DNA until it finds its consensus sequence, where it cleaves and resolves the cruciform DNA. The sequence is that of Crossover junction endodeoxyribonuclease RuvC from Salinispora arenicola (strain CNS-205).